A 297-amino-acid polypeptide reads, in one-letter code: ER membrane protein complex subunit 2-B (297 aa).

TPR repeat units lie at residues 87-120 (HRVK…DPTN), 155-188 (QEAW…NPHN), and 192-225 (YQQF…NNHS).

This sequence belongs to the EMC2 family. As to quaternary structure, component of the ER membrane protein complex (EMC).

Its subcellular location is the endoplasmic reticulum membrane. Functionally, part of the endoplasmic reticulum membrane protein complex (EMC) that enables the energy-independent insertion into endoplasmic reticulum membranes of newly synthesized membrane proteins. Preferentially accommodates proteins with transmembrane domains that are weakly hydrophobic or contain destabilizing features such as charged and aromatic residues. Involved in the cotranslational insertion of multi-pass membrane proteins in which stop-transfer membrane-anchor sequences become ER membrane spanning helices. It is also required for the post-translational insertion of tail-anchored/TA proteins in endoplasmic reticulum membranes. By mediating the proper cotranslational insertion of N-terminal transmembrane domains in an N-exo topology, with translocated N-terminus in the lumen of the ER, controls the topology of multi-pass membrane proteins. By regulating the insertion of various proteins in membranes, it is indirectly involved in many cellular processes. This chain is ER membrane protein complex subunit 2-B (emc2-b), found in Xenopus laevis (African clawed frog).